Here is a 233-residue protein sequence, read N- to C-terminus: Small ribosomal subunit protein uS3 (233 aa).

The KH type-2 domain maps to 39 to 107 (IRAFLKRKLY…DVNINIKEER (69 aa)). Basic and acidic residues predominate over residues 212–222 (MQPEKTEESAP). The segment at 212 to 233 (MQPEKTEESAPAKKSRRTRRGK) is disordered. Positions 224–233 (KKSRRTRRGK) are enriched in basic residues.

It belongs to the universal ribosomal protein uS3 family. Part of the 30S ribosomal subunit. Forms a tight complex with proteins S10 and S14.

Functionally, binds the lower part of the 30S subunit head. Binds mRNA in the 70S ribosome, positioning it for translation. The protein is Small ribosomal subunit protein uS3 of Campylobacter jejuni subsp. doylei (strain ATCC BAA-1458 / RM4099 / 269.97).